A 670-amino-acid polypeptide reads, in one-letter code: Putative segment polarity protein dishevelled homolog DVL1P1 (670 aa).

The region spanning 1 to 85 (MAETKIIYHM…RVVSWLVLVE (85 aa)) is the DIX domain. The segment at 89–240 (SDAGSQGTDS…ADRASSFSSM (152 aa)) is disordered. The segment covering 142–151 (SHRRDRARRR) has biased composition (basic residues). The span at 152-171 (NREEAARTNGHPRGDRRRDV) shows a compositional bias: basic and acidic residues. Composition is skewed to low complexity over residues 176–192 (DSAS…SSFV) and 201–214 (SRLS…TSSR). Residues 215–228 (LIRKHKRRRRKQRL) are compositionally biased toward basic residues. The region spanning 251 to 323 (TVTLNMERHH…NDDAVRVLRE (73 aa)) is the PDZ domain. The 75-residue stretch at 400-474 (PDSGLEIRDR…SEQCYYVFGD (75 aa)) folds into the DEP domain. Positions 518–642 (PGPPPCFPPA…PGGPPVRELA (125 aa)) are disordered. 2 stretches are compositionally biased toward low complexity: residues 526 to 553 (PAYQ…SSGS) and 600 to 614 (SRGS…SYAP).

It belongs to the DSH family. Expressed in thymus, heart, liver, kidney, brain, skeletal muscle, and pancreas.

Its subcellular location is the cytoplasm. Functionally, may play a role in the signal transduction pathway mediated by multiple Wnt genes. The sequence is that of Putative segment polarity protein dishevelled homolog DVL1P1 (DVL1P1) from Homo sapiens (Human).